The following is a 228-amino-acid chain: MADS-box transcription factor 22 (228 aa).

One can recognise an MADS-box domain in the interval 1-61 (MARERREIKR…GKLSHFASSS (61 aa)). The K-box domain maps to 86–176 (LNLEHSKYAH…RNQVSQISPA (91 aa)). Residues 189–217 (EGQSSESVMTALHSGSSQSQDNDDGSDVS) are disordered.

Expressed in palea and stamen primordia. Expressed in shoots and coleoptiles.

The protein resides in the nucleus. Probable transcription factor. May be required for spikelet (rice flower) development. Transcription factor that functions to support the MADS55 in its function as negative regulator of brassinosteroid signaling. This chain is MADS-box transcription factor 22 (MADS22), found in Oryza sativa subsp. japonica (Rice).